The sequence spans 58 residues: Small ribosomal subunit protein bS21 (58 aa).

The segment covering 32-42 has biased composition (basic and acidic residues); sequence ARRREHYEKPS. Positions 32–58 are disordered; sequence ARRREHYEKPSVRRKKKSEAARKRRWH. A compositionally biased stretch (basic residues) spans 43–58; sequence VRRKKKSEAARKRRWH.

It belongs to the bacterial ribosomal protein bS21 family.

The protein is Small ribosomal subunit protein bS21 of Moorella thermoacetica (strain ATCC 39073 / JCM 9320).